Consider the following 120-residue polypeptide: Spermidine export protein MdtJ (120 aa).

Transmembrane regions (helical) follow at residues 1–21 (MFYW…TLSM), 31–51 (AGFI…SFAV), 54–74 (IALG…ITIF), and 81–101 (EALS…IVLI).

The protein belongs to the drug/metabolite transporter (DMT) superfamily. Small multidrug resistance (SMR) (TC 2.A.7.1) family. MdtJ subfamily. Forms a complex with MdtI.

It localises to the cell inner membrane. Functionally, catalyzes the excretion of spermidine. The chain is Spermidine export protein MdtJ from Salmonella paratyphi A (strain ATCC 9150 / SARB42).